A 113-amino-acid chain; its full sequence is Hydrogenase maturation factor HypA (113 aa).

His-2 contributes to the Ni(2+) binding site. Positions 73, 76, 89, and 92 each coordinate Zn(2+).

It belongs to the HypA/HybF family.

Functionally, involved in the maturation of [NiFe] hydrogenases. Required for nickel insertion into the metal center of the hydrogenase. This chain is Hydrogenase maturation factor HypA, found in Prosthecochloris aestuarii (strain DSM 271 / SK 413).